Consider the following 124-residue polypeptide: Small ribosomal subunit protein uS12 (124 aa).

A 3-methylthioaspartic acid modification is found at D89.

It belongs to the universal ribosomal protein uS12 family. Part of the 30S ribosomal subunit. Contacts proteins S8 and S17. May interact with IF1 in the 30S initiation complex.

Functionally, with S4 and S5 plays an important role in translational accuracy. In terms of biological role, interacts with and stabilizes bases of the 16S rRNA that are involved in tRNA selection in the A site and with the mRNA backbone. Located at the interface of the 30S and 50S subunits, it traverses the body of the 30S subunit contacting proteins on the other side and probably holding the rRNA structure together. The combined cluster of proteins S8, S12 and S17 appears to hold together the shoulder and platform of the 30S subunit. The sequence is that of Small ribosomal subunit protein uS12 from Buchnera aphidicola subsp. Cinara cedri (strain Cc).